The sequence spans 206 residues: Small ribosomal subunit protein uS4 (206 aa).

An S4 RNA-binding domain is found at 96–161 (RRLDNVVYRM…QGRIQAALAL (66 aa)).

The protein belongs to the universal ribosomal protein uS4 family. In terms of assembly, part of the 30S ribosomal subunit. Contacts protein S5. The interaction surface between S4 and S5 is involved in control of translational fidelity.

Functionally, one of the primary rRNA binding proteins, it binds directly to 16S rRNA where it nucleates assembly of the body of the 30S subunit. In terms of biological role, with S5 and S12 plays an important role in translational accuracy. The protein is Small ribosomal subunit protein uS4 of Legionella pneumophila (strain Corby).